The chain runs to 325 residues: Elongation factor P--(R)-beta-lysine ligase (325 aa).

76 to 78 (SPE) is a binding site for substrate. ATP-binding positions include 100 to 102 (RNE) and Asn-109. Tyr-118 provides a ligand contact to substrate. An ATP-binding site is contributed by 244–245 (EL). Residue Glu-251 coordinates substrate. Residue Gly-300 coordinates ATP.

This sequence belongs to the class-II aminoacyl-tRNA synthetase family. EpmA subfamily. In terms of assembly, homodimer.

The enzyme catalyses D-beta-lysine + L-lysyl-[protein] + ATP = N(6)-((3R)-3,6-diaminohexanoyl)-L-lysyl-[protein] + AMP + diphosphate + H(+). Its function is as follows. With EpmB is involved in the beta-lysylation step of the post-translational modification of translation elongation factor P (EF-P). Catalyzes the ATP-dependent activation of (R)-beta-lysine produced by EpmB, forming a lysyl-adenylate, from which the beta-lysyl moiety is then transferred to the epsilon-amino group of a conserved specific lysine residue in EF-P. The sequence is that of Elongation factor P--(R)-beta-lysine ligase from Pectobacterium atrosepticum (strain SCRI 1043 / ATCC BAA-672) (Erwinia carotovora subsp. atroseptica).